The chain runs to 1358 residues: Xanthine dehydrogenase/oxidase (1358 aa).

The 2Fe-2S ferredoxin-type domain maps to 8-95 (DELVFFVNGK…HVAVTTVEGI (88 aa)). Positions 47, 52, 55, 77, 117, 120, 152, and 154 each coordinate [2Fe-2S] cluster. The FAD-binding PCMH-type domain occupies 255–440 (FKGERVMWIQ…LSVEIPYSKE (186 aa)). FAD-binding positions include 283–290 (LVVGNTEV), Phe-363, 373–377 (ALGGN), Asp-386, Leu-430, and Lys-448. Gln-796 and Phe-827 together coordinate Mo-molybdopterin. Substrate is bound by residues Glu-831 and Arg-909. Arg-941 is a Mo-molybdopterin binding site. Positions 943 and 1039 each coordinate substrate. Ala-1108 is a Mo-molybdopterin binding site. Glu-1290 functions as the Proton acceptor in the catalytic mechanism.

The protein belongs to the xanthine dehydrogenase family. Homodimer. It depends on FAD as a cofactor. Mo-molybdopterin is required as a cofactor. [2Fe-2S] cluster serves as cofactor. As to expression, detected in liver (at protein level).

It localises to the peroxisome. The protein localises to the cytoplasm. The enzyme catalyses xanthine + NAD(+) + H2O = urate + NADH + H(+). It carries out the reaction hypoxanthine + NAD(+) + H2O = xanthine + NADH + H(+). The catalysed reaction is xanthine + O2 + H2O = urate + H2O2. Its function is as follows. Key enzyme in purine degradation. Catalyzes the oxidation of hypoxanthine to xanthine. Catalyzes the oxidation of xanthine to uric acid. Contributes to the generation of reactive oxygen species. This Gallus gallus (Chicken) protein is Xanthine dehydrogenase/oxidase (XDH).